We begin with the raw amino-acid sequence, 315 residues long: Tetratricopeptide repeat protein 23-like (315 aa).

Positions 28-56 (KIPEHQRTDESSPTSGSEESEEDTKAKEK) are disordered. 3 coiled-coil regions span residues 65–90 (REKLAQSQKKIAQLIKGKKNIEANKE), 179–200 (REAYFNLQKSERNMKELRESYK), and 250–280 (SELVSLYQEIAQIEQLRRNHEQAIQYLHQAH).

The protein resides in the cytoplasm. It is found in the cytoskeleton. It localises to the microtubule organizing center. Its subcellular location is the centrosome. The protein localises to the spindle. The protein resides in the midbody. The polypeptide is Tetratricopeptide repeat protein 23-like (TTC23L) (Bos taurus (Bovine)).